The sequence spans 699 residues: Condensin complex subunit 2 (699 aa).

2 disordered regions span residues 1–35 (MSTS…SAAA) and 176–203 (ESQA…KRRK).

It belongs to the CND2 (condensin subunit 2) family. In terms of assembly, component of the condensin complex, which contains the XCAP-E/SMC2 and XCAP-C/SMC4 heterodimer, and three non SMC subunits that probably regulate the complex: XCAP-H/NCAPH, XCAP-D2/NCAPD2 and XCAP-G/NCAPG. Post-translationally, phosphorylated by CDK1. Its phosphorylation, as well as that of XCAP-D2 and XCAP-G subunits, activates the condensin complex and is required for chromosome condensation.

Its subcellular location is the nucleus. The protein localises to the cytoplasm. The protein resides in the chromosome. Functionally, regulatory subunit of the condensin complex, a complex required for conversion of interphase chromatin into mitotic-like condense chromosomes. The condensin complex probably introduces positive supercoils into relaxed DNA in the presence of type I topoisomerases and converts nicked DNA into positive knotted forms in the presence of type II topoisomerase. The chain is Condensin complex subunit 2 (ncaph) from Xenopus laevis (African clawed frog).